The chain runs to 179 residues: 3-hydroxyanthranilate 3,4-dioxygenase 2 (179 aa).

Position 44 (R44) interacts with O2. H48, E60, and H99 together coordinate Fe cation. Residue E60 participates in substrate binding. Substrate contacts are provided by R103 and E113.

The protein belongs to the 3-HAO family. Fe(2+) serves as cofactor.

The protein resides in the cytoplasm. The enzyme catalyses 3-hydroxyanthranilate + O2 = (2Z,4Z)-2-amino-3-carboxymuconate 6-semialdehyde. It participates in cofactor biosynthesis; NAD(+) biosynthesis; quinolinate from L-kynurenine: step 3/3. Catalyzes the oxidative ring opening of 3-hydroxyanthranilate to 2-amino-3-carboxymuconate semialdehyde, which spontaneously cyclizes to quinolinate. The sequence is that of 3-hydroxyanthranilate 3,4-dioxygenase 2 (bna1-2) from Aspergillus oryzae (strain ATCC 42149 / RIB 40) (Yellow koji mold).